The sequence spans 680 residues: DNA-directed RNA polymerase subunit beta' (680 aa).

Positions 69, 71, 87, and 90 each coordinate Zn(2+). Positions 489, 491, and 493 each coordinate Mg(2+).

Belongs to the RNA polymerase beta' chain family. RpoC1 subfamily. As to quaternary structure, in plastids the minimal PEP RNA polymerase catalytic core is composed of four subunits: alpha, beta, beta', and beta''. When a (nuclear-encoded) sigma factor is associated with the core the holoenzyme is formed, which can initiate transcription. The cofactor is Mg(2+). Requires Zn(2+) as cofactor.

The protein localises to the plastid. It localises to the chloroplast. The enzyme catalyses RNA(n) + a ribonucleoside 5'-triphosphate = RNA(n+1) + diphosphate. In terms of biological role, DNA-dependent RNA polymerase catalyzes the transcription of DNA into RNA using the four ribonucleoside triphosphates as substrates. This chain is DNA-directed RNA polymerase subunit beta', found in Arabidopsis thaliana (Mouse-ear cress).